The sequence spans 441 residues: Ribosomal protein uS12 methylthiotransferase RimO (441 aa).

The MTTase N-terminal domain maps to 8-118; it reads PKIGFVSLGC…VLQHVHHYVP (111 aa). Positions 17, 53, 82, 150, 154, and 157 each coordinate [4Fe-4S] cluster. Positions 136-373 constitute a Radical SAM core domain; that stretch reads LTPRHYAYLK…MQLQQQISAE (238 aa). Residues 376-441 form the TRAM domain; that stretch reads QEKVGREILV…DEYDLWGSRV (66 aa).

This sequence belongs to the methylthiotransferase family. RimO subfamily. Requires [4Fe-4S] cluster as cofactor.

It localises to the cytoplasm. It catalyses the reaction L-aspartate(89)-[ribosomal protein uS12]-hydrogen + (sulfur carrier)-SH + AH2 + 2 S-adenosyl-L-methionine = 3-methylsulfanyl-L-aspartate(89)-[ribosomal protein uS12]-hydrogen + (sulfur carrier)-H + 5'-deoxyadenosine + L-methionine + A + S-adenosyl-L-homocysteine + 2 H(+). In terms of biological role, catalyzes the methylthiolation of an aspartic acid residue of ribosomal protein uS12. The sequence is that of Ribosomal protein uS12 methylthiotransferase RimO from Salmonella paratyphi A (strain ATCC 9150 / SARB42).